Consider the following 405-residue polypeptide: L-rhamnonate dehydratase (405 aa).

2 residues coordinate substrate: H33 and R59. Mg(2+) contacts are provided by D226, E252, and E280. H329 acts as the Proton acceptor in catalysis. Substrate is bound at residue E349.

Belongs to the mandelate racemase/muconate lactonizing enzyme family. RhamD subfamily. Homooctamer; tetramer of dimers. It depends on Mg(2+) as a cofactor.

The enzyme catalyses L-rhamnonate = 2-dehydro-3-deoxy-L-rhamnonate + H2O. Catalyzes the dehydration of L-rhamnonate to 2-keto-3-deoxy-L-rhamnonate (KDR). The polypeptide is L-rhamnonate dehydratase (Salmonella paratyphi A (strain AKU_12601)).